We begin with the raw amino-acid sequence, 360 residues long: Phospho-N-acetylmuramoyl-pentapeptide-transferase (360 aa).

The next 10 membrane-spanning stretches (helical) occupy residues 27-47 (IVSL…LIAW), 72-92 (PTMG…MWAY), 94-114 (SNPY…VGFI), 132-152 (WKYF…YSIG), 168-188 (IMPQ…VGTS), 199-219 (GLAI…AWAT), 236-256 (AGEL…FLWF), 263-283 (VFMG…IAVL), 288-308 (FLLV…ILQV), and 338-358 (VIVR…ATLK).

It belongs to the glycosyltransferase 4 family. MraY subfamily. It depends on Mg(2+) as a cofactor.

The protein resides in the cell inner membrane. It catalyses the reaction UDP-N-acetyl-alpha-D-muramoyl-L-alanyl-gamma-D-glutamyl-meso-2,6-diaminopimeloyl-D-alanyl-D-alanine + di-trans,octa-cis-undecaprenyl phosphate = di-trans,octa-cis-undecaprenyl diphospho-N-acetyl-alpha-D-muramoyl-L-alanyl-D-glutamyl-meso-2,6-diaminopimeloyl-D-alanyl-D-alanine + UMP. The protein operates within cell wall biogenesis; peptidoglycan biosynthesis. Functionally, catalyzes the initial step of the lipid cycle reactions in the biosynthesis of the cell wall peptidoglycan: transfers peptidoglycan precursor phospho-MurNAc-pentapeptide from UDP-MurNAc-pentapeptide onto the lipid carrier undecaprenyl phosphate, yielding undecaprenyl-pyrophosphoryl-MurNAc-pentapeptide, known as lipid I. This is Phospho-N-acetylmuramoyl-pentapeptide-transferase from Yersinia pseudotuberculosis serotype O:1b (strain IP 31758).